A 264-amino-acid polypeptide reads, in one-letter code: S-adenosylmethionine decarboxylase proenzyme (264 aa).

S113 (schiff-base intermediate with substrate; via pyruvic acid) is an active-site residue. S113 bears the Pyruvic acid (Ser); by autocatalysis mark. The active-site Proton acceptor; for processing activity is H118. The active-site Proton donor; for catalytic activity is C141.

This sequence belongs to the prokaryotic AdoMetDC family. Type 2 subfamily. Heterooctamer of four alpha and four beta chains arranged as a tetramer of alpha/beta heterodimers. It depends on pyruvate as a cofactor. In terms of processing, is synthesized initially as an inactive proenzyme. Formation of the active enzyme involves a self-maturation process in which the active site pyruvoyl group is generated from an internal serine residue via an autocatalytic post-translational modification. Two non-identical subunits are generated from the proenzyme in this reaction, and the pyruvate is formed at the N-terminus of the alpha chain, which is derived from the carboxyl end of the proenzyme. The post-translation cleavage follows an unusual pathway, termed non-hydrolytic serinolysis, in which the side chain hydroxyl group of the serine supplies its oxygen atom to form the C-terminus of the beta chain, while the remainder of the serine residue undergoes an oxidative deamination to produce ammonia and the pyruvoyl group blocking the N-terminus of the alpha chain.

The enzyme catalyses S-adenosyl-L-methionine + H(+) = S-adenosyl 3-(methylsulfanyl)propylamine + CO2. It functions in the pathway amine and polyamine biosynthesis; S-adenosylmethioninamine biosynthesis; S-adenosylmethioninamine from S-adenosyl-L-methionine: step 1/1. Catalyzes the decarboxylation of S-adenosylmethionine to S-adenosylmethioninamine (dcAdoMet), the propylamine donor required for the synthesis of the polyamines spermine and spermidine from the diamine putrescine. The sequence is that of S-adenosylmethionine decarboxylase proenzyme from Stenotrophomonas maltophilia (strain K279a).